Here is a 388-residue protein sequence, read N- to C-terminus: Formate-dependent phosphoribosylglycinamide formyltransferase (388 aa).

N(1)-(5-phospho-beta-D-ribosyl)glycinamide-binding positions include 20–21 (EL) and E80. ATP-binding positions include R112, K153, 158–163 (SSGKGQ), 193–196 (EEFI), and E201. Positions 117–306 (RLAFEKLGLR…EFEIHARAIL (190 aa)) constitute an ATP-grasp domain. Mg(2+)-binding residues include E265 and E277. Residues D284, K352, and 359 to 360 (RR) contribute to the N(1)-(5-phospho-beta-D-ribosyl)glycinamide site.

It belongs to the PurK/PurT family. Homodimer.

The catalysed reaction is N(1)-(5-phospho-beta-D-ribosyl)glycinamide + formate + ATP = N(2)-formyl-N(1)-(5-phospho-beta-D-ribosyl)glycinamide + ADP + phosphate + H(+). It participates in purine metabolism; IMP biosynthesis via de novo pathway; N(2)-formyl-N(1)-(5-phospho-D-ribosyl)glycinamide from N(1)-(5-phospho-D-ribosyl)glycinamide (formate route): step 1/1. In terms of biological role, involved in the de novo purine biosynthesis. Catalyzes the transfer of formate to 5-phospho-ribosyl-glycinamide (GAR), producing 5-phospho-ribosyl-N-formylglycinamide (FGAR). Formate is provided by PurU via hydrolysis of 10-formyl-tetrahydrofolate. This Methanococcus maripaludis (strain C5 / ATCC BAA-1333) protein is Formate-dependent phosphoribosylglycinamide formyltransferase.